Consider the following 369-residue polypeptide: Flagellar P-ring protein (369 aa).

The signal sequence occupies residues 1-23 (MRIASFFTVLLTLLTLNITPASA).

Belongs to the FlgI family. As to quaternary structure, the basal body constitutes a major portion of the flagellar organelle and consists of four rings (L,P,S, and M) mounted on a central rod.

It is found in the periplasm. It localises to the bacterial flagellum basal body. Assembles around the rod to form the L-ring and probably protects the motor/basal body from shearing forces during rotation. This Pectobacterium atrosepticum (strain SCRI 1043 / ATCC BAA-672) (Erwinia carotovora subsp. atroseptica) protein is Flagellar P-ring protein.